The sequence spans 354 residues: Guanine nucleotide-binding protein G(i) subunit alpha (354 aa).

Glycine 2 is lipidated: N-myristoyl glycine. Cysteine 3 is lipidated: S-palmitoyl cysteine. One can recognise a G-alpha domain in the interval 32–354; that stretch reads REVKLLLLGA…KNNLKDCGLF (323 aa). Residues 35-48 are G1 motif; that stretch reads KLLLLGAGESGKST. Residues 40-47, 175-181, 200-204, 269-272, and alanine 326 contribute to the GTP site; these read GAGESGKS, LRTRVKT, DVGGQ, and NKKD. 2 residues coordinate Mg(2+): serine 47 and threonine 181. The interval 173-181 is G2 motif; the sequence is DVLRTRVKT. The segment at 196-205 is G3 motif; it reads FKMFDVGGQR. Residues 265–272 are G4 motif; that stretch reads ILFLNKKD. Residues 324–329 form a G5 motif region; the sequence is TCATDT.

This sequence belongs to the G-alpha family. G(i/o/t/z) subfamily. In terms of assembly, g proteins are composed of 3 units; alpha, beta and gamma. The alpha chain contains the guanine nucleotide binding site.

Guanine nucleotide-binding proteins (G proteins) are involved as modulators or transducers in various transmembrane signaling systems. This chain is Guanine nucleotide-binding protein G(i) subunit alpha, found in Planorbella trivolvis (Marsh rams-horn).